The primary structure comprises 328 residues: Probable cell division protein WhiA (328 aa).

A DNA-binding region (H-T-H motif) is located at residues 275 to 308; sequence SLEELGQLASPPMTKDAVAGRIRRLLSMADKRAE.

It belongs to the WhiA family.

Its function is as follows. Involved in cell division and chromosome segregation. This is Probable cell division protein WhiA from Corynebacterium urealyticum (strain ATCC 43042 / DSM 7109).